A 376-amino-acid chain; its full sequence is Glutamate 5-kinase (376 aa).

Residue Lys15 participates in ATP binding. Substrate is bound by residues Ser55, Asp142, and Asn154. Residues 174–175 and 216–222 each bind ATP; these read TD and TGGMATK. One can recognise a PUA domain in the interval 281 to 359; it reads AGKVLVDAGA…AEIEQLLGYR (79 aa).

It belongs to the glutamate 5-kinase family.

It localises to the cytoplasm. The enzyme catalyses L-glutamate + ATP = L-glutamyl 5-phosphate + ADP. The protein operates within amino-acid biosynthesis; L-proline biosynthesis; L-glutamate 5-semialdehyde from L-glutamate: step 1/2. Its function is as follows. Catalyzes the transfer of a phosphate group to glutamate to form L-glutamate 5-phosphate. The chain is Glutamate 5-kinase from Trichlorobacter lovleyi (strain ATCC BAA-1151 / DSM 17278 / SZ) (Geobacter lovleyi).